Reading from the N-terminus, the 541-residue chain is Chaperonin GroEL (541 aa).

ATP contacts are provided by residues 29–32 (TLGP), 86–90 (DGTTT), glycine 413, and aspartate 495.

As to quaternary structure, forms a cylinder of 14 subunits composed of two heptameric rings stacked back-to-back. Interacts with the co-chaperonin GroES.

The protein localises to the cytoplasm. The enzyme catalyses ATP + H2O + a folded polypeptide = ADP + phosphate + an unfolded polypeptide.. Its function is as follows. Together with its co-chaperonin GroES, plays an essential role in assisting protein folding. The GroEL-GroES system forms a nano-cage that allows encapsulation of the non-native substrate proteins and provides a physical environment optimized to promote and accelerate protein folding. This chain is Chaperonin GroEL, found in Thermoanaerobacter brockii (Thermoanaerobium brockii).